Here is a 474-residue protein sequence, read N- to C-terminus: tRNA-2-methylthio-N(6)-dimethylallyladenosine synthase (474 aa).

One can recognise an MTTase N-terminal domain in the interval 3 to 120 (KKLHIKTWGC…LPEMIEQIQQ (118 aa)). The [4Fe-4S] cluster site is built by Cys-12, Cys-49, Cys-83, Cys-157, Cys-161, and Cys-164. The Radical SAM core domain occupies 143–375 (RAEGPSAFVS…QDRITQQAMR (233 aa)). The 64-residue stretch at 378–441 (RQMLGTVQRI…TNSLRGKFIR (64 aa)) folds into the TRAM domain.

Belongs to the methylthiotransferase family. MiaB subfamily. In terms of assembly, monomer. Requires [4Fe-4S] cluster as cofactor.

It is found in the cytoplasm. It catalyses the reaction N(6)-dimethylallyladenosine(37) in tRNA + (sulfur carrier)-SH + AH2 + 2 S-adenosyl-L-methionine = 2-methylsulfanyl-N(6)-dimethylallyladenosine(37) in tRNA + (sulfur carrier)-H + 5'-deoxyadenosine + L-methionine + A + S-adenosyl-L-homocysteine + 2 H(+). Its function is as follows. Catalyzes the methylthiolation of N6-(dimethylallyl)adenosine (i(6)A), leading to the formation of 2-methylthio-N6-(dimethylallyl)adenosine (ms(2)i(6)A) at position 37 in tRNAs that read codons beginning with uridine. The chain is tRNA-2-methylthio-N(6)-dimethylallyladenosine synthase from Shewanella loihica (strain ATCC BAA-1088 / PV-4).